A 508-amino-acid chain; its full sequence is Dihydroniloticin synthase CYP71CD4 (508 aa).

The helical transmembrane segment at 6–26 threads the bilayer; that stretch reads LDFFSVTSFIIFFLFLFRLVW. Position 449 (C449) interacts with heme.

It belongs to the cytochrome P450 family. Requires heme as cofactor. In terms of tissue distribution, mainly expressed in roots and, to a lesser extent, in stems.

It is found in the membrane. The enzyme catalyses tirucalla-7,24-dien-3beta-ol + 2 reduced [NADPH--hemoprotein reductase] + 2 O2 = dihydroniloticin + 2 oxidized [NADPH--hemoprotein reductase] + 2 H2O + 2 H(+). It functions in the pathway secondary metabolite biosynthesis; terpenoid biosynthesis. Monooxygenase involved in the biosynthesis of quassinoids triterpene natural products such as ailanthone, chaparrinone, glaucarubinone and amarolide, allelopathic degraded triterpene lactones inhibiting the growth of other plants, and possessing antimalarial, antifeedant, insecticidal, anti-inflammatory and anticancer activities. Catalyzes the conversion of tirucalladienol to dihydroniloticin. The protein is Dihydroniloticin synthase CYP71CD4 of Ailanthus altissima (Tree-of-heaven).